We begin with the raw amino-acid sequence, 196 residues long: MPIGVPKVPFRSPGEGDTSWVDIYNRLYRERLFFLGQEVDTEISNQLISLMIYLSIEKDTKDLYLFINSPGGWVISGMAVYDTMQFVRPDVQTICMGLAASIASFILVGGAITKRIAFPHARVMIHQPASSFYEAQTGEFILEAEELLKVRETITRVYVQRTGKPIWVVSEDMERDVFMSATEAQAHGIVDLVAVQ.

Serine 101 serves as the catalytic Nucleophile. Histidine 126 is a catalytic residue.

This sequence belongs to the peptidase S14 family. Component of the chloroplastic Clp protease core complex.

It is found in the plastid. It localises to the chloroplast stroma. The enzyme catalyses Hydrolysis of proteins to small peptides in the presence of ATP and magnesium. alpha-casein is the usual test substrate. In the absence of ATP, only oligopeptides shorter than five residues are hydrolyzed (such as succinyl-Leu-Tyr-|-NHMec, and Leu-Tyr-Leu-|-Tyr-Trp, in which cleavage of the -Tyr-|-Leu- and -Tyr-|-Trp bonds also occurs).. Functionally, cleaves peptides in various proteins in a process that requires ATP hydrolysis. Has a chymotrypsin-like activity. Plays a major role in the degradation of misfolded proteins. In Nasturtium officinale (Watercress), this protein is ATP-dependent Clp protease proteolytic subunit.